A 370-amino-acid polypeptide reads, in one-letter code: Cyclin-A3-4 (370 aa).

This sequence belongs to the cyclin family. Cyclin AB subfamily. In terms of assembly, interacts with FZR2/CCS52A1, FZR1/CCS52A2 and FZR3/CCS52B.

This Arabidopsis thaliana (Mouse-ear cress) protein is Cyclin-A3-4 (CYCA3-4).